Here is a 197-residue protein sequence, read N- to C-terminus: Recombination protein RecR (197 aa).

Residues 56–71 (CPVCGTLDTRAPCSIC) form a C4-type zinc finger. The Toprim domain maps to 79–174 (TLICVVRDVA…TVSGLAQGVP (96 aa)).

The protein belongs to the RecR family.

Its function is as follows. May play a role in DNA repair. It seems to be involved in an RecBC-independent recombinational process of DNA repair. It may act with RecF and RecO. This is Recombination protein RecR from Rhodospirillum rubrum (strain ATCC 11170 / ATH 1.1.1 / DSM 467 / LMG 4362 / NCIMB 8255 / S1).